The chain runs to 54 residues: uncharacterized protein (54 aa).

A disordered region spans residues 1-38; the sequence is MFPNSNGPNKMKALVAPSNSSTTSKTNNNNLPPNGRSS. A compositionally biased stretch (low complexity) spans 17–38; it reads PSNSSTTSKTNNNNLPPNGRSS.

This is an uncharacterized protein from Dictyostelium discoideum (Social amoeba).